A 227-amino-acid polypeptide reads, in one-letter code: Phosphoribosylformylglycinamidine synthase subunit PurQ (227 aa).

The 225-residue stretch at 3-227 folds into the Glutamine amidotransferase type-1 domain; that stretch reads FAVCVFPGSN…LMLWYSLLSD (225 aa). Residue cysteine 86 is the Nucleophile of the active site. Catalysis depends on residues histidine 203 and glutamate 205.

In terms of assembly, part of the FGAM synthase complex composed of 1 PurL, 1 PurQ and 2 PurS subunits.

It localises to the cytoplasm. It catalyses the reaction N(2)-formyl-N(1)-(5-phospho-beta-D-ribosyl)glycinamide + L-glutamine + ATP + H2O = 2-formamido-N(1)-(5-O-phospho-beta-D-ribosyl)acetamidine + L-glutamate + ADP + phosphate + H(+). It carries out the reaction L-glutamine + H2O = L-glutamate + NH4(+). It functions in the pathway purine metabolism; IMP biosynthesis via de novo pathway; 5-amino-1-(5-phospho-D-ribosyl)imidazole from N(2)-formyl-N(1)-(5-phospho-D-ribosyl)glycinamide: step 1/2. Part of the phosphoribosylformylglycinamidine synthase complex involved in the purines biosynthetic pathway. Catalyzes the ATP-dependent conversion of formylglycinamide ribonucleotide (FGAR) and glutamine to yield formylglycinamidine ribonucleotide (FGAM) and glutamate. The FGAM synthase complex is composed of three subunits. PurQ produces an ammonia molecule by converting glutamine to glutamate. PurL transfers the ammonia molecule to FGAR to form FGAM in an ATP-dependent manner. PurS interacts with PurQ and PurL and is thought to assist in the transfer of the ammonia molecule from PurQ to PurL. The sequence is that of Phosphoribosylformylglycinamidine synthase subunit PurQ from Aquifex aeolicus (strain VF5).